We begin with the raw amino-acid sequence, 142 residues long: Midkine-A (142 aa).

A signal peptide spans M1–Q20. 5 disulfide bridges follow: C36–C60, C44–C69, C51–C73, C83–C115, and C93–C125.

This sequence belongs to the pleiotrophin family. As to expression, expression at the mid-gastrula stage begins in the neural anlage, and becomes increasingly prominent in the central nervous system and head mesenchyme during neurula stages. Although the mRNA is localized to the developing central nervous system (CNS), the protein is deposited at the neuromuscular junction (NMJ). In the tailbud stage embryo, expressed in the head and tail regions as well as in the CNS. In adults, expression is highest in the brain, eye and bone, with lower expression in the heart and lung. Not expressed in the ovary.

It localises to the secreted. Secreted protein that functions as a cytokine and growth factor and mediates its signal through cell-surface proteoglycan and non-proteoglycan receptors. Binds cell-surface proteoglycan receptors via their chondroitin sulfate (CS) groups. Thereby regulates many processes like inflammatory response, cell proliferation, cell adhesion, cell growth, cell survival, tissue regeneration, cell differentiation and cell migration. Inhibits mesoderm formation and promotes neural formation during development. Plays a role in development of the neuromuscular junction (NMJ). Has antibacterial activity against both Gram-positive and Gram-negative bacteria. This Xenopus laevis (African clawed frog) protein is Midkine-A (mdk-a).